The sequence spans 112 residues: Colipase (112 aa).

Positions M1–A17 are cleaved as a signal peptide. Residues V18–R22 constitute a propeptide, enterostatin, activation peptide. Intrachain disulfides connect C34-C45, C40-C56, C44-C78, C66-C86, and C80-C104.

The protein belongs to the colipase family. In terms of assembly, forms a 1:1 stoichiometric complex with pancreatic lipase. Expressed by the pancreas.

The protein localises to the secreted. In terms of biological role, colipase is a cofactor of pancreatic lipase. It allows the lipase to anchor itself to the lipid-water interface. Without colipase the enzyme is washed off by bile salts, which have an inhibitory effect on the lipase. Functionally, enterostatin has a biological activity as a satiety signal. The chain is Colipase (CLPS) from Sus scrofa (Pig).